We begin with the raw amino-acid sequence, 219 residues long: Bacterial microcompartment shell protein EutL (219 aa).

BMC circularly permuted domains are found at residues 1 to 113 (MPAL…GAAF) and 114 to 215 (QWAN…ARNP). Ethanolamine is bound by residues aspartate 45, aspartate 46, glutamate 83, and phenylalanine 113. Residues 45–46 (DD) are part of the acidic patch lining the small pore. Glutamate 157 contacts Zn(2+). 183–185 (TNY) contacts ethanolamine.

This sequence belongs to the EutL/PduB family. Homotrimerizes to form a pseudohexamer. The trimers form a two-dimensional array about 37 Angstroms thick.

The protein resides in the bacterial microcompartment. The protein operates within amine and polyamine degradation; ethanolamine degradation. Its function is as follows. A component of the bacterial microcompartment (BMC) shell dedicated to ethanolamine degradation. Two crystal forms have been seen; a form with a closed central pore that has 3 very small (1.1-2.2 Angstroms) channels per trimer lined by acidic and aromatic residues. A form with a large central pore (8-12 Angstroms) has also been seen; this is probably a functional pore which allows molecules to enter and exit the BMC in a selective, gated manner. Another group only sees the central pore in the presence of Zn(2+); soaking crystals in ZnCl(2) leads to dramatic conformational changes that open a central pore of about 12 Angstroms. Whether Zn(2+) binding is physiologically relevant is unclear, however it suggests a gating mechanism exists. Ethanolamine-binding by the small channels has been hypothesized to stabilize the EutL central pore in a closed (non-transporting) state. An open pore is thought to be large enough to transport ATP and/or cobalamin. The chain is Bacterial microcompartment shell protein EutL (eutL) from Escherichia coli (strain K12).